The primary structure comprises 498 residues: MQARELIQKFITKVSTFPETTYTAEDEQYLFNVVLDLVGEGDETPVVAQETTTLIDLKEALVQLAVDHQRIQDLAAERDILGAKLMDLVTPLPSAVNKRFWTLYEKDPEKALAYFYELSQANDYIKVAAIAKNIAYDVPTKYGDLEITINLSKPEKDPKQIALAKTMKQTGYPKCQLCLENEGYAGRLDFPARRNHRIVRFDLEQQTWGFQYSPYAYFNEHSIFLDGKHEPMVIDQTTFKNLLQIVKQFPGYFAGSNADLPIVGGSILTHEHYQGGRHDFPMAKAPISTPLQFAGYDDIQAGIVEWPMSVMRLTGSDAKRIETLAADILTKWQHYSDPEVQVLAQEADGTPHHTITPIARMRGDQYEIDLVLRDNQTSPEHPDGIYHPHADVQHIKKENIGLIEVMGLAILPPRLKSEMAEVEKYLCDQPNEMAAYHKTWADQIKADHSAITPANVTTLVQNEVGKVFMRVLEDAGVFKRDAKGQAAFIKFTERVNNA.

Belongs to the galactose-1-phosphate uridylyltransferase type 2 family.

The protein localises to the cytoplasm. The catalysed reaction is alpha-D-galactose 1-phosphate + UDP-alpha-D-glucose = alpha-D-glucose 1-phosphate + UDP-alpha-D-galactose. It participates in carbohydrate metabolism; galactose metabolism. This is Galactose-1-phosphate uridylyltransferase from Latilactobacillus sakei subsp. sakei (strain 23K) (Lactobacillus sakei subsp. sakei).